Reading from the N-terminus, the 690-residue chain is Protein arginine N-methyltransferase 7 (690 aa).

SAM-dependent MTase PRMT-type domains follow at residues 14–357 (QNSW…YSLW) and 366–690 (TKSV…QKKL).

The protein belongs to the class I-like SAM-binding methyltransferase superfamily. Protein arginine N-methyltransferase family. PRMT7 subfamily. As to expression, expressed at low level in ovary.

In terms of biological role, essential arginine methyltransferase that can both catalyze the formation of omega-N monomethylarginine (MMA) and symmetrical dimethylarginine (sDMA). Specifically mediates the symmetrical dimethylation of arginine residues in the small nuclear ribonucleoproteins SmD1 and SmD3. The protein is Protein arginine N-methyltransferase 7 (Art7) of Drosophila melanogaster (Fruit fly).